The chain runs to 368 residues: Histidinol-phosphate aminotransferase (368 aa).

Lys-228 bears the N6-(pyridoxal phosphate)lysine mark.

The protein belongs to the class-II pyridoxal-phosphate-dependent aminotransferase family. Histidinol-phosphate aminotransferase subfamily. Pyridoxal 5'-phosphate serves as cofactor.

It catalyses the reaction L-histidinol phosphate + 2-oxoglutarate = 3-(imidazol-4-yl)-2-oxopropyl phosphate + L-glutamate. Its pathway is amino-acid biosynthesis; L-histidine biosynthesis; L-histidine from 5-phospho-alpha-D-ribose 1-diphosphate: step 7/9. The polypeptide is Histidinol-phosphate aminotransferase (Methanosarcina mazei (strain ATCC BAA-159 / DSM 3647 / Goe1 / Go1 / JCM 11833 / OCM 88) (Methanosarcina frisia)).